A 362-amino-acid polypeptide reads, in one-letter code: sn-glycerol-3-phosphate import ATP-binding protein UgpC (362 aa).

One can recognise an ABC transporter domain in the interval 4-235 (LSFRNVKKTY…PASTFVAGFI (232 aa)). 37 to 44 (GPSGCGKS) lines the ATP pocket.

The protein belongs to the ABC transporter superfamily. sn-glycerol-3-phosphate importer (TC 3.A.1.1.3) family. In terms of assembly, the complex is composed of two ATP-binding proteins (UgpC), two transmembrane proteins (UgpA and UgpE) and a solute-binding protein (UgpB).

Its subcellular location is the cell inner membrane. The enzyme catalyses sn-glycerol 3-phosphate(out) + ATP + H2O = sn-glycerol 3-phosphate(in) + ADP + phosphate + H(+). Functionally, part of the ABC transporter complex UgpBAEC involved in sn-glycerol-3-phosphate (G3P) import. Responsible for energy coupling to the transport system. The sequence is that of sn-glycerol-3-phosphate import ATP-binding protein UgpC from Bordetella bronchiseptica (strain ATCC BAA-588 / NCTC 13252 / RB50) (Alcaligenes bronchisepticus).